Here is a 330-residue protein sequence, read N- to C-terminus: Phosphate acyltransferase (330 aa).

The protein belongs to the PlsX family. As to quaternary structure, homodimer. Probably interacts with PlsY.

Its subcellular location is the cytoplasm. The catalysed reaction is a fatty acyl-[ACP] + phosphate = an acyl phosphate + holo-[ACP]. It functions in the pathway lipid metabolism; phospholipid metabolism. In terms of biological role, catalyzes the reversible formation of acyl-phosphate (acyl-PO(4)) from acyl-[acyl-carrier-protein] (acyl-ACP). This enzyme utilizes acyl-ACP as fatty acyl donor, but not acyl-CoA. The chain is Phosphate acyltransferase from Bacillus cytotoxicus (strain DSM 22905 / CIP 110041 / 391-98 / NVH 391-98).